A 408-amino-acid chain; its full sequence is Large ribosomal subunit protein uL4 (408 aa).

Positions Pro-58 to Ala-98 are disordered.

The protein belongs to the universal ribosomal protein uL4 family.

In Prunus armeniaca (Apricot), this protein is Large ribosomal subunit protein uL4 (RPL4).